A 446-amino-acid polypeptide reads, in one-letter code: Exodeoxyribonuclease 7 large subunit (446 aa).

The protein belongs to the XseA family. As to quaternary structure, heterooligomer composed of large and small subunits.

The protein resides in the cytoplasm. It catalyses the reaction Exonucleolytic cleavage in either 5'- to 3'- or 3'- to 5'-direction to yield nucleoside 5'-phosphates.. Its function is as follows. Bidirectionally degrades single-stranded DNA into large acid-insoluble oligonucleotides, which are then degraded further into small acid-soluble oligonucleotides. The sequence is that of Exodeoxyribonuclease 7 large subunit from Streptococcus pneumoniae serotype 4 (strain ATCC BAA-334 / TIGR4).